A 346-amino-acid polypeptide reads, in one-letter code: Holliday junction branch migration complex subunit RuvB (346 aa).

Positions 1–181 are large ATPase domain (RuvB-L); it reads MSDRNPLIDA…FGIPVRLNFY (181 aa). ATP contacts are provided by residues Leu20, Arg21, Gly62, Lys65, Thr66, Thr67, 128–130, Arg171, Tyr181, and Arg218; that span reads EDF. A Mg(2+)-binding site is contributed by Thr66. The tract at residues 182–252 is small ATPAse domain (RuvB-S); that stretch reads TVEELEYIVR…IADEALSRLE (71 aa). Positions 255–346 are head domain (RuvB-H); sequence NRGLDQLDRR…SQYGLFMEDE (92 aa). Residues Arg291, Arg310, and Arg315 each coordinate DNA.

It belongs to the RuvB family. Homohexamer. Forms an RuvA(8)-RuvB(12)-Holliday junction (HJ) complex. HJ DNA is sandwiched between 2 RuvA tetramers; dsDNA enters through RuvA and exits via RuvB. An RuvB hexamer assembles on each DNA strand where it exits the tetramer. Each RuvB hexamer is contacted by two RuvA subunits (via domain III) on 2 adjacent RuvB subunits; this complex drives branch migration. In the full resolvosome a probable DNA-RuvA(4)-RuvB(12)-RuvC(2) complex forms which resolves the HJ.

It localises to the cytoplasm. The enzyme catalyses ATP + H2O = ADP + phosphate + H(+). Functionally, the RuvA-RuvB-RuvC complex processes Holliday junction (HJ) DNA during genetic recombination and DNA repair, while the RuvA-RuvB complex plays an important role in the rescue of blocked DNA replication forks via replication fork reversal (RFR). RuvA specifically binds to HJ cruciform DNA, conferring on it an open structure. The RuvB hexamer acts as an ATP-dependent pump, pulling dsDNA into and through the RuvAB complex. RuvB forms 2 homohexamers on either side of HJ DNA bound by 1 or 2 RuvA tetramers; 4 subunits per hexamer contact DNA at a time. Coordinated motions by a converter formed by DNA-disengaged RuvB subunits stimulates ATP hydrolysis and nucleotide exchange. Immobilization of the converter enables RuvB to convert the ATP-contained energy into a lever motion, pulling 2 nucleotides of DNA out of the RuvA tetramer per ATP hydrolyzed, thus driving DNA branch migration. The RuvB motors rotate together with the DNA substrate, which together with the progressing nucleotide cycle form the mechanistic basis for DNA recombination by continuous HJ branch migration. Branch migration allows RuvC to scan DNA until it finds its consensus sequence, where it cleaves and resolves cruciform DNA. The sequence is that of Holliday junction branch migration complex subunit RuvB from Brucella suis (strain ATCC 23445 / NCTC 10510).